A 236-amino-acid polypeptide reads, in one-letter code: Thylakoid lumenal 17.4 kDa protein, chloroplastic (236 aa).

Pentapeptide repeat domains are found at residues 124–163 and 169–208; these read TNLKGKTLSAALMVGAKFDGADMTEVVMSKAYAVEASFKG and AVIDRVNFGKSNLKGAVFRNTVLSGSTFEEANLEDVVFED.

Interacts in vitro with LTO1.

It localises to the plastid. The protein localises to the chloroplast thylakoid lumen. This Arabidopsis thaliana (Mouse-ear cress) protein is Thylakoid lumenal 17.4 kDa protein, chloroplastic.